A 271-amino-acid chain; its full sequence is Indole-3-glycerol phosphate synthase (271 aa).

It belongs to the TrpC family.

It catalyses the reaction 1-(2-carboxyphenylamino)-1-deoxy-D-ribulose 5-phosphate + H(+) = (1S,2R)-1-C-(indol-3-yl)glycerol 3-phosphate + CO2 + H2O. The protein operates within amino-acid biosynthesis; L-tryptophan biosynthesis; L-tryptophan from chorismate: step 4/5. The protein is Indole-3-glycerol phosphate synthase of Haloarcula marismortui (strain ATCC 43049 / DSM 3752 / JCM 8966 / VKM B-1809) (Halobacterium marismortui).